Consider the following 960-residue polypeptide: FYVE, RhoGEF and PH domain-containing protein 1 (960 aa).

Disordered regions lie at residues 1–210 (MHGH…SSAA) and 226–355 (ASDR…REIP). Ser-48 is modified (phosphoserine). Positions 125-135 (PHPEGPQRLRS) are enriched in basic and acidic residues. Composition is skewed to pro residues over residues 137 to 149 (PGPP…PRPS), 156 to 165 (GPKPQVPPKP), and 173 to 190 (VLPP…PLPA). The SH3-binding signature appears at 171 to 187 (PRVLPPPEPIPPPPSRP). Position 205 is a phosphoserine (Ser-205). The span at 231 to 251 (APGPCPVPPEPAMLPQPPPQP) shows a compositional bias: pro residues. Over residues 273–284 (RDGEKVPNRDSG) the composition is skewed to basic and acidic residues. Positions 285–294 (IDSISSPSNS) are enriched in low complexity. The span at 335-350 (VDSDLEEEEEEEEEEK) shows a compositional bias: acidic residues. The region spanning 372–560 (KVFHIANELL…ATAAEHSNAA (189 aa)) is the DH domain. The PH 1 domain occupies 589-688 (ELIKEGHILK…WVQAINSTLL (100 aa)). A disordered region spans residues 701-725 (NSTNRDDEDTPPNSPNVDLGKRAPT). A Phosphothreonine modification is found at Thr-710. At Ser-714 the chain carries Phosphoserine. The FYVE-type zinc finger occupies 729 to 789 (EKEVTMCMRC…VCTDCYVALH (61 aa)). Zn(2+) is bound by residues Cys-735, Cys-738, Cys-752, Cys-755, Cys-760, Cys-763, Cys-781, and Cys-784. Positions 820-920 (NSVICSFLHY…WMAVLGRAGR (101 aa)) constitute a PH 2 domain. A disordered region spans residues 922–960 (DTFCPGPTLSEDKEMEETPVAASGATAEPPEASQTRDKT).

As to quaternary structure, interacts with DBNL/ABP1 and CTTN. Binds CDC42. May interact with CCPG1.

The protein localises to the cytoplasm. It localises to the cell projection. It is found in the lamellipodium. Its subcellular location is the ruffle. The protein resides in the cytoskeleton. Functionally, activates CDC42, a member of the Ras-like family of Rho- and Rac proteins, by exchanging bound GDP for free GTP. Plays a role in regulating the actin cytoskeleton and cell shape. This is FYVE, RhoGEF and PH domain-containing protein 1 (Fgd1) from Mus musculus (Mouse).